Reading from the N-terminus, the 169-residue chain is MICOS complex subunit MIC19 (169 aa).

Gly2 carries N-myristoyl glycine lipidation. Residues 123–165 (ENVCQDNENEIVRCLQENPGRVLKCAPLTEAFEKCVGEFRQQV) form the CHCH domain. 2 consecutive short sequence motifs (cx9C motif) follow at residues 126–136 (CQDNENEIVRC) and 147–157 (CAPLTEAFEKC). 2 cysteine pairs are disulfide-bonded: Cys126-Cys157 and Cys136-Cys147.

This sequence belongs to the MICOS complex subunit Mic19 family. Metazoan Mic19 subfamily. In terms of assembly, component of the mitochondrial contact site and cristae organizing system (MICOS) complex.

It localises to the mitochondrion inner membrane. In terms of biological role, plays a role in maintaining mitochondrial morphology. May act as a component of the MICOS complex, a large protein complex of the mitochondria. The protein is MICOS complex subunit MIC19 of Caenorhabditis elegans.